Consider the following 211-residue polypeptide: Bcl-2 homologous antagonist/killer (211 aa).

Residues 1–28 are disordered; the sequence is MASGQGPGPPRQECGEPALPSASEEQVA. Alanine 2 carries the post-translational modification N-acetylalanine. Residues 74–88 carry the BH3 motif; it reads VGRQLAIIGDDINRR. The BH1 signature appears at 117 to 136; that stretch reads SLFESGINWGRVVALLGFGY. Aspartate 160 and histidine 164 together coordinate Zn(2+). The BH2 signature appears at 169–184; the sequence is RWIAQRGGWVAALNLG. Residues 188 to 205 form a helical membrane-spanning segment; sequence ILNVLVVLGVVLLGQFVV.

It belongs to the Bcl-2 family. As to quaternary structure, homodimer. Formation of the homodimer is zinc-dependent. Forms heterodimers with BCL2 and BCL2L1 isoform Bcl-X(L). Forms heterooligomers with BAX. Interacts with BCL2A1. Interacts with RTL10/BOP. Interacts with VDAC1. Interacts with GIMAP3/IAN4 and GIMAP5/IAN5. In terms of assembly, (Microbial infection) Interacts with vaccinia virus protein F1. (Microbial infection) Interacts with myxoma virus protein M11L. As to quaternary structure, (Microbial infection) Interacts with Epstein-Barr virus protein BALF1. In terms of assembly, (Microbial infection) Interacts with adenovirus protein E1B 19K. As to expression, expressed in a wide variety of tissues, with highest levels in the heart and skeletal muscle.

It localises to the mitochondrion outer membrane. Functionally, plays a role in the mitochondrial apoptotic process. Upon arrival of cell death signals, promotes mitochondrial outer membrane (MOM) permeabilization by oligomerizing to form pores within the MOM. This releases apoptogenic factors into the cytosol, including cytochrome c, promoting the activation of caspase 9 which in turn processes and activates the effector caspases. The chain is Bcl-2 homologous antagonist/killer (BAK1) from Homo sapiens (Human).